The primary structure comprises 102 residues: RNA-binding protein Hfq (102 aa).

The 60-residue stretch at Asp9–Val68 folds into the Sm domain. The tract at residues Ser65 to Glu102 is disordered. Over residues Ala93–Glu102 the composition is skewed to polar residues.

This sequence belongs to the Hfq family. As to quaternary structure, homohexamer.

In terms of biological role, RNA chaperone that binds small regulatory RNA (sRNAs) and mRNAs to facilitate mRNA translational regulation in response to envelope stress, environmental stress and changes in metabolite concentrations. Also binds with high specificity to tRNAs. This is RNA-binding protein Hfq from Photorhabdus laumondii subsp. laumondii (strain DSM 15139 / CIP 105565 / TT01) (Photorhabdus luminescens subsp. laumondii).